The sequence spans 241 residues: Probable transcriptional regulatory protein Daro_4067 (241 aa).

The tract at residues 1–22 is disordered; the sequence is MAGHSKWANIQHRKGRQDEKRG.

It belongs to the TACO1 family.

The protein resides in the cytoplasm. The protein is Probable transcriptional regulatory protein Daro_4067 of Dechloromonas aromatica (strain RCB).